A 327-amino-acid polypeptide reads, in one-letter code: Tetraacyldisaccharide 4'-kinase (327 aa).

52-59 (TLGGAGKT) contributes to the ATP binding site.

It belongs to the LpxK family.

The catalysed reaction is a lipid A disaccharide + ATP = a lipid IVA + ADP + H(+). It participates in glycolipid biosynthesis; lipid IV(A) biosynthesis; lipid IV(A) from (3R)-3-hydroxytetradecanoyl-[acyl-carrier-protein] and UDP-N-acetyl-alpha-D-glucosamine: step 6/6. Transfers the gamma-phosphate of ATP to the 4'-position of a tetraacyldisaccharide 1-phosphate intermediate (termed DS-1-P) to form tetraacyldisaccharide 1,4'-bis-phosphate (lipid IVA). The chain is Tetraacyldisaccharide 4'-kinase from Methylorubrum extorquens (strain PA1) (Methylobacterium extorquens).